We begin with the raw amino-acid sequence, 529 residues long: uncharacterized protein (529 aa).

ABC transporter domains are found at residues 6–257 (LAIE…QKLL) and 287–526 (IRKG…RQLL). ATP-binding positions include 42-49 (GESGSGKS) and 319-326 (GESGSGKS).

Belongs to the ABC transporter superfamily.

This is an uncharacterized protein from Escherichia coli (strain K12).